Reading from the N-terminus, the 439-residue chain is Secreted RxLR effector protein 117 (439 aa).

The first 21 residues, 1–21 (MRGAYYVLAALLVVASSQIAA), serve as a signal peptide directing secretion. Residues 48–65 (RYLRGGHDVHDDSANEER) carry the RxLR-dEER motif.

This sequence belongs to the RxLR effector family.

The protein resides in the secreted. Its subcellular location is the host nucleus. Secreted effector that acts as an elicitor that induces cell death in host plant cells. The chain is Secreted RxLR effector protein 117 from Plasmopara viticola (Downy mildew of grapevine).